The sequence spans 440 residues: Xylose isomerase (440 aa).

Catalysis depends on residues His-100 and Asp-103. Glu-231, Glu-267, His-270, Asp-295, Asp-306, Asp-308, and Asp-338 together coordinate Mg(2+).

It belongs to the xylose isomerase family. In terms of assembly, homotetramer. Mg(2+) serves as cofactor.

It localises to the cytoplasm. The enzyme catalyses alpha-D-xylose = alpha-D-xylulofuranose. The chain is Xylose isomerase from Paraburkholderia phytofirmans (strain DSM 17436 / LMG 22146 / PsJN) (Burkholderia phytofirmans).